We begin with the raw amino-acid sequence, 369 residues long: Chorismate synthase (369 aa).

NADP(+) is bound by residues R48 and R54. FMN-binding positions include 125–127 (RSS), 238–239 (NA), G278, 293–297 (KPTSS), and R319.

The protein belongs to the chorismate synthase family. Homotetramer. The cofactor is FMNH2.

It catalyses the reaction 5-O-(1-carboxyvinyl)-3-phosphoshikimate = chorismate + phosphate. Its pathway is metabolic intermediate biosynthesis; chorismate biosynthesis; chorismate from D-erythrose 4-phosphate and phosphoenolpyruvate: step 7/7. Functionally, catalyzes the anti-1,4-elimination of the C-3 phosphate and the C-6 proR hydrogen from 5-enolpyruvylshikimate-3-phosphate (EPSP) to yield chorismate, which is the branch point compound that serves as the starting substrate for the three terminal pathways of aromatic amino acid biosynthesis. This reaction introduces a second double bond into the aromatic ring system. The protein is Chorismate synthase of Burkholderia mallei (strain NCTC 10229).